The chain runs to 508 residues: Protein DETOXIFICATION 52 (508 aa).

12 helical membrane passes run 48 to 68 (ILAA…LGHI), 78 to 98 (LAIA…ALGM), 122 to 142 (VLFL…LGKI), 156 to 176 (AQTY…LHPL), 189 to 209 (LTLA…FLVS), 222 to 242 (AAAS…IAGL), 270 to 290 (IGVC…GLLI), 300 to 320 (GILI…GLAV), 341 to 361 (IVAV…AWGV), 368 to 388 (IFTN…ILGL), 415 to 437 (INLG…WAAY), and 441 to 463 (GLWV…VVAT).

Belongs to the multi antimicrobial extrusion (MATE) (TC 2.A.66.1) family. As to expression, detected in the part of the veins in cotyledons of 6-day-old seedlings and the basal parts of the petioles in older plants. Highly expressed in the vascular tissues of hypocotyl in dark-grown seedlings.

The protein resides in the late endosome membrane. In terms of biological role, may act as a negative regulator of hypocotyl cell elongation in the light. This chain is Protein DETOXIFICATION 52, found in Arabidopsis thaliana (Mouse-ear cress).